The chain runs to 297 residues: Aspartate carbamoyltransferase catalytic subunit (297 aa).

Residues Arg49 and Thr50 each coordinate carbamoyl phosphate. An L-aspartate-binding site is contributed by Lys77. 3 residues coordinate carbamoyl phosphate: Arg99, His129, and Gln132. Arg162 and Arg215 together coordinate L-aspartate. 2 residues coordinate carbamoyl phosphate: Gly256 and Pro257.

The protein belongs to the aspartate/ornithine carbamoyltransferase superfamily. ATCase family. Heterododecamer (2C3:3R2) of six catalytic PyrB chains organized as two trimers (C3), and six regulatory PyrI chains organized as three dimers (R2).

The catalysed reaction is carbamoyl phosphate + L-aspartate = N-carbamoyl-L-aspartate + phosphate + H(+). It participates in pyrimidine metabolism; UMP biosynthesis via de novo pathway; (S)-dihydroorotate from bicarbonate: step 2/3. In terms of biological role, catalyzes the condensation of carbamoyl phosphate and aspartate to form carbamoyl aspartate and inorganic phosphate, the committed step in the de novo pyrimidine nucleotide biosynthesis pathway. This Legionella pneumophila (strain Lens) protein is Aspartate carbamoyltransferase catalytic subunit.